A 217-amino-acid polypeptide reads, in one-letter code: Nucleoredoxin-like protein 1 (217 aa).

Residues 1 to 164 (MASLFSGRIL…AAELLDRSFL (164 aa)) enclose the Thioredoxin domain. The segment covering 188 to 204 (VDRDVGRERGRNGRDSG) has biased composition (basic and acidic residues). Residues 188–217 (VDRDVGRERGRNGRDSGDPQGDAGTRAELW) form a disordered region.

Belongs to the nucleoredoxin family. In terms of assembly, interacts with isoform 1 of BSG. Expressed in the retina (at protein level). Expressed predominantly by photoreceptors in both the inner and outer nuclear layer (at protein level). Not expressed in the testis, spleen, intestine, lung, cerebellum, or kidney.

It is found in the cell projection. It localises to the cilium. The protein localises to the photoreceptor outer segment. Functionally, plays an important role in retinal cone photoreceptor survival. In association with glucose transporter SLC16A1/GLUT1 and BSG, promotes retinal cone survival by enhancing aerobic glycolysis and accelerating the entry of glucose into photoreceptors. May play a role in cone cell viability, slowing down cone degeneration, does not seem to play a role in degenerating rods. This is Nucleoredoxin-like protein 1 (Nxnl1) from Mus musculus (Mouse).